Consider the following 412-residue polypeptide: Glutamate-1-semialdehyde 2,1-aminomutase (412 aa).

The residue at position 260 (Lys260) is an N6-(pyridoxal phosphate)lysine.

The protein belongs to the class-III pyridoxal-phosphate-dependent aminotransferase family. HemL subfamily. Requires pyridoxal 5'-phosphate as cofactor.

Its subcellular location is the cytoplasm. It catalyses the reaction (S)-4-amino-5-oxopentanoate = 5-aminolevulinate. It participates in porphyrin-containing compound metabolism; protoporphyrin-IX biosynthesis; 5-aminolevulinate from L-glutamyl-tRNA(Glu): step 2/2. This Methanocorpusculum labreanum (strain ATCC 43576 / DSM 4855 / Z) protein is Glutamate-1-semialdehyde 2,1-aminomutase.